The sequence spans 616 residues: Glycogenin-1 (616 aa).

3 residues coordinate UDP: Leu10, Tyr16, and Arg95. Leu10, Tyr16, Arg95, Lys104, Asp120, Asp122, Asn158, Ser159, Asp185, Asp188, and Gln189 together coordinate UDP-alpha-D-glucose. Positions 120 and 122 each coordinate UDP. Mn(2+)-binding residues include Asp120 and Asp122. The O-linked (Glc...) tyrosine glycan is linked to Tyr230. Residues His247, Gly250, and Lys253 each coordinate UDP. A Mn(2+)-binding site is contributed by His247. UDP-alpha-D-glucose is bound by residues Gly250 and Lys253. The segment covering 283 to 302 has biased composition (basic and acidic residues); it reads HQLNNEVSKPKISDSDKTET. Disordered stretches follow at residues 283-320, 335-354, 371-525, and 553-588; these read HQLN…PTTN, NQNA…NPVP, TNQP…EKDK, and RDAT…EMPN. A compositionally biased stretch (basic and acidic residues) spans 377–386; sequence ESREYSKEND. Positions 400–419 are enriched in polar residues; the sequence is SPPNSTQELNSSYSVVSTQA. Over residues 450–461 the composition is skewed to low complexity; it reads STAASSNNNVSN. 2 stretches are compositionally biased toward polar residues: residues 462 to 485 and 492 to 503; these read QPDG…PSNP and DNIQKPSVSTND. Over residues 567–576 the composition is skewed to basic and acidic residues; sequence DKQEDMKLTA. The segment covering 577–586 has biased composition (polar residues); the sequence is EETNQPQQEM. O-linked (Glc...) tyrosine glycosylation occurs at Tyr598.

The protein belongs to the glycosyltransferase 8 family. Glycogenin subfamily. Mn(2+) serves as cofactor.

The protein resides in the cytoplasm. Its subcellular location is the vacuole. The catalysed reaction is L-tyrosyl-[glycogenin] + UDP-alpha-D-glucose = alpha-D-glucosyl-L-tyrosyl-[glycogenin] + UDP + H(+). It carries out the reaction [1,4-alpha-D-glucosyl](n)-L-tyrosyl-[glycogenin] + UDP-alpha-D-glucose = [1,4-alpha-D-glucosyl](n+1)-L-tyrosyl-[glycogenin] + UDP + H(+). Its function is as follows. Self-glucosylating initiator of glycogen synthesis. It catalyzes the formation of a short alpha (1,4)-glucosyl chain covalently attached via a glucose 1-O-tyrosyl linkage to internal tyrosine residues and these chains act as primers for the elongation reaction catalyzed by glycogen synthase. Capable of transferring glucosyl residues to unbound acceptors such as free oligoglucans or oligoglucan derivatives. This is Glycogenin-1 from Saccharomyces cerevisiae (strain ATCC 204508 / S288c) (Baker's yeast).